The primary structure comprises 360 residues: Photosystem II protein D1 (360 aa).

3 helical membrane passes run 29-46 (YIGW…TATS), 118-133 (HFLL…EWEL), and 142-156 (WIFV…AASA). Chlorophyll a is bound at residue His-118. Tyr-126 provides a ligand contact to pheophytin a. [CaMn4O5] cluster contacts are provided by Asp-170 and Glu-189. Residues 197–218 (FHMAGVAGVFGGSLFSAMHGSL) traverse the membrane as a helical segment. His-198 contacts chlorophyll a. A quinone is bound by residues His-215 and 264–265 (SF). His-215 serves as a coordination point for Fe cation. Fe cation is bound at residue His-272. The chain crosses the membrane as a helical span at residues 274–288 (FLALWPVLGIWLTAM). Residues His-332, Glu-333, Asp-342, and Ala-344 each coordinate [CaMn4O5] cluster. The propeptide occupies 345–360 (SGDVLPVAFTAPAVNA).

This sequence belongs to the reaction center PufL/M/PsbA/D family. In terms of assembly, PSII is composed of 1 copy each of membrane proteins PsbA, PsbB, PsbC, PsbD, PsbE, PsbF, PsbH, PsbI, PsbJ, PsbK, PsbL, PsbM, PsbT, PsbX, PsbY, PsbZ, Psb30/Ycf12, at least 3 peripheral proteins of the oxygen-evolving complex and a large number of cofactors. It forms dimeric complexes. The cofactor is The D1/D2 heterodimer binds P680, chlorophylls that are the primary electron donor of PSII, and subsequent electron acceptors. It shares a non-heme iron and each subunit binds pheophytin, quinone, additional chlorophylls, carotenoids and lipids. D1 provides most of the ligands for the Mn4-Ca-O5 cluster of the oxygen-evolving complex (OEC). There is also a Cl(-1) ion associated with D1 and D2, which is required for oxygen evolution. The PSII complex binds additional chlorophylls, carotenoids and specific lipids.. In terms of processing, tyr-161 forms a radical intermediate that is referred to as redox-active TyrZ, YZ or Y-Z. Post-translationally, C-terminally processed by CTPA; processing is essential to allow assembly of the oxygen-evolving complex and thus photosynthetic growth.

It localises to the plastid. The protein resides in the chloroplast thylakoid membrane. The enzyme catalyses 2 a plastoquinone + 4 hnu + 2 H2O = 2 a plastoquinol + O2. Functionally, photosystem II (PSII) is a light-driven water:plastoquinone oxidoreductase that uses light energy to abstract electrons from H(2)O, generating O(2) and a proton gradient subsequently used for ATP formation. It consists of a core antenna complex that captures photons, and an electron transfer chain that converts photonic excitation into a charge separation. The D1/D2 (PsbA/PsbD) reaction center heterodimer binds P680, the primary electron donor of PSII as well as several subsequent electron acceptors. This is Photosystem II protein D1 from Thalassiosira pseudonana (Marine diatom).